A 486-amino-acid chain; its full sequence is Monocarboxylate transporter 12 (486 aa).

Residues 1–9 (MTKITRVGS) are Cytoplasmic-facing. Helical transmembrane passes span 10-30 (ASPP…LVTI), 58-78 (AWIH…GSVV), 86-106 (AGIM…SFAT), 115-135 (LGVL…AMVG), 148-168 (IAMS…QLLI), and 177-197 (LLIL…MRPI). Over residues 201–220 (EDPSGPEKSHDRDAQREDCK) the composition is skewed to basic and acidic residues. The segment at 201-221 (EDPSGPEKSHDRDAQREDCKQ) is disordered. Transmembrane regions (helical) follow at residues 253-273 (FVVL…LFVY), 289-309 (AFLM…FGWL), 320-340 (YVCY…LPML), 353-373 (FGYF…EIVG), 383-403 (VVYF…GWLV), and 410-430 (TAAF…LGFA). The Cytoplasmic portion of the chain corresponds to 431–486 (KIAKRMKRTQVPFLVKDSDPKLHLWTNGSVAYSIAKELDQKDEESLAKARTGCNLT).

It belongs to the major facilitator superfamily. Monocarboxylate porter (TC 2.A.1.13) family. As to quaternary structure, interacts with isoform 2 of BSG; this interaction is required for its localization to the plasma membrane. Detected in kidney, choroid plexus, testis, lung, stomach, large and small intestine, spleen, fat and parotid gland. In eye, expressed in cornea, ciliary epithelium, lens epithelium and lens fiber.

It localises to the cell membrane. The protein localises to the basolateral cell membrane. The catalysed reaction is creatine(in) = creatine(out). The enzyme catalyses guanidinoacetate(in) = guanidinoacetate(out). Its activity is regulated as follows. Creatine uptake is inhibited by carbonyl cyanide 3-chlorophenylhydrazone (CCCP) and by valinomycin. Its function is as follows. Functions as a transporter for creatine and as well for its precursor guanidinoacetate. Transport of creatine and GAA is independent of resting membrane potential and extracellular Na(+), Cl(-), or pH. Contributes to the process of creatine biosynthesis and distribution. The protein is Monocarboxylate transporter 12 of Rattus norvegicus (Rat).